A 114-amino-acid chain; its full sequence is MPPLSESEFLALAEAELTRIENIVETAADEADADIEVNRTGNVLTLEFDDGSKIIINSQAPMQELWVAARAGGFHFRRGDDGRWVDTRSKEELYVALSRYISQQSDVDVTLAAG.

This sequence belongs to the frataxin family.

Its function is as follows. Involved in iron-sulfur (Fe-S) cluster assembly. May act as a regulator of Fe-S biogenesis. This is Iron-sulfur cluster assembly protein CyaY from Ralstonia pickettii (strain 12J).